The sequence spans 519 residues: Anthranilate synthase component 1 (519 aa).

L-tryptophan-binding positions include serine 39 and 290–292 (PYM). 327-328 (GT) lines the chorismate pocket. Glutamate 360 is a Mg(2+) binding site. Residues tyrosine 448, arginine 468, 482 to 484 (GAG), and glycine 484 contribute to the chorismate site. Glutamate 497 provides a ligand contact to Mg(2+).

The protein belongs to the anthranilate synthase component I family. As to quaternary structure, heterotetramer consisting of two non-identical subunits: a beta subunit (TrpG) and a large alpha subunit (TrpE). Mg(2+) is required as a cofactor.

It catalyses the reaction chorismate + L-glutamine = anthranilate + pyruvate + L-glutamate + H(+). Its pathway is amino-acid biosynthesis; L-tryptophan biosynthesis; L-tryptophan from chorismate: step 1/5. With respect to regulation, feedback inhibited by tryptophan. In terms of biological role, part of a heterotetrameric complex that catalyzes the two-step biosynthesis of anthranilate, an intermediate in the biosynthesis of L-tryptophan. In the first step, the glutamine-binding beta subunit (TrpG) of anthranilate synthase (AS) provides the glutamine amidotransferase activity which generates ammonia as a substrate that, along with chorismate, is used in the second step, catalyzed by the large alpha subunit of AS (TrpE) to produce anthranilate. In the absence of TrpG, TrpE can synthesize anthranilate directly from chorismate and high concentrations of ammonia. The protein is Anthranilate synthase component 1 (trpE) of Serratia marcescens.